A 202-amino-acid chain; its full sequence is LexA repressor (202 aa).

Residues 28-48 (RAEIAAQLGFRSPNAAEEHLK) constitute a DNA-binding region (H-T-H motif). Catalysis depends on for autocatalytic cleavage activity residues S119 and K156.

Belongs to the peptidase S24 family. Homodimer.

It catalyses the reaction Hydrolysis of Ala-|-Gly bond in repressor LexA.. Functionally, represses a number of genes involved in the response to DNA damage (SOS response), including recA and lexA. Binds to the 16 bp palindromic sequence 5'-CTGTATATATATACAG-3'. In the presence of single-stranded DNA, RecA interacts with LexA causing an autocatalytic cleavage which disrupts the DNA-binding part of LexA, leading to derepression of the SOS regulon and eventually DNA repair. The protein is LexA repressor of Erwinia tasmaniensis (strain DSM 17950 / CFBP 7177 / CIP 109463 / NCPPB 4357 / Et1/99).